Reading from the N-terminus, the 258-residue chain is Serine protease VLSP-3 (258 aa).

The signal sequence occupies residues 1–18 (MVLIRVLANLLVLQLSYA). The propeptide occupies 19-24 (QKSSEL). Residues 25–249 (VIGGDECNIN…YTDWIQSIIA (225 aa)) enclose the Peptidase S1 domain. Disulfide bonds link Cys31-Cys163, Cys50-Cys66, Cys98-Cys256, Cys142-Cys210, Cys174-Cys189, and Cys200-Cys225. Asn44 is a glycosylation site (N-linked (GlcNAc...) asparagine). The active-site Charge relay system is His65. Residues Asn79 and Asn103 are each glycosylated (N-linked (GlcNAc...) asparagine). The active-site Charge relay system is the Asp110. 2 N-linked (GlcNAc...) asparagine glycosylation sites follow: Asn154 and Asn170. Ser204 acts as the Charge relay system in catalysis. N-linked (GlcNAc...) asparagine glycosylation is present at Asn251.

This sequence belongs to the peptidase S1 family. Snake venom subfamily. Monomer. In terms of tissue distribution, expressed by the venom gland.

The protein resides in the secreted. Its function is as follows. Snake venom serine protease that may act in the hemostasis system of the prey. This chain is Serine protease VLSP-3, found in Macrovipera lebetinus (Levantine viper).